A 740-amino-acid chain; its full sequence is Ion-translocating oxidoreductase complex subunit C (740 aa).

2 4Fe-4S ferredoxin-type domains span residues glycine 369–tyrosine 397 and lysine 407–phenylalanine 436. Positions 377, 380, 383, 387, 416, 419, 422, and 426 each coordinate [4Fe-4S] cluster. The interval alanine 598–lysine 716 is disordered.

This sequence belongs to the 4Fe4S bacterial-type ferredoxin family. RnfC subfamily. In terms of assembly, the complex is composed of six subunits: RsxA, RsxB, RsxC, RsxD, RsxE and RsxG. It depends on [4Fe-4S] cluster as a cofactor.

It is found in the cell inner membrane. Functionally, part of a membrane-bound complex that couples electron transfer with translocation of ions across the membrane. Required to maintain the reduced state of SoxR. In Shigella flexneri serotype 5b (strain 8401), this protein is Ion-translocating oxidoreductase complex subunit C.